A 231-amino-acid chain; its full sequence is Female protein (231 aa).

Residues 1–19 (MDKMLLLLGVSILLSEVFA) form the signal peptide. The Pentraxin (PTX) domain occupies 24-223 (TGKVFVFPRE…YAVIRPRCVA (200 aa)). Asparagine 51 carries an N-linked (GlcNAc...) asparagine glycan. Residues cysteine 55 and cysteine 114 are joined by a disulfide bond. The Ca(2+) site is built by aspartate 77, asparagine 78, glutamate 155, glutamine 156, aspartate 157, and glutamine 167.

This sequence belongs to the pentraxin family. Homopentamer. Pentraxin (or pentaxin) have a discoid arrangement of 5 non-covalently bound subunits. Requires Ca(2+) as cofactor.

Its subcellular location is the secreted. The protein is Female protein of Nothocricetulus migratorius (Gray dwarf hamster).